The primary structure comprises 605 residues: Bifunctional purine biosynthesis protein ADE16 (605 aa).

The 147-residue stretch at 1-147 (MSSEAPIALL…KNHGRVSIIS (147 aa)) folds into the MGS-like domain. IMP contacts are provided by residues 35–38 (SGGT), 65–68 (RVKT), 102–103 (CN), and 126–127 (DI). Lysine 138 (proton donor/acceptor; for FAICAR cyclization activity) is an active-site residue. 5-amino-1-(5-phospho-beta-D-ribosyl)imidazole-4-carboxamide is bound by residues 219–220 (RY), histidine 279, glycine 327, aspartate 350, asparagine 442, and arginine 462. The active-site Proton acceptor; for AICAR formyltransferase activity is the histidine 279. Residue isoleucine 463 coordinates (6R)-10-formyltetrahydrofolate. Phenylalanine 554 contributes to the 5-amino-1-(5-phospho-beta-D-ribosyl)imidazole-4-carboxamide binding site. Aspartate 559 contacts (6R)-10-formyltetrahydrofolate. 5-amino-1-(5-phospho-beta-D-ribosyl)imidazole-4-carboxamide is bound at residue arginine 601.

It belongs to the PurH family. Homodimer.

Its subcellular location is the cytoplasm. It is found in the cytosol. It carries out the reaction (6R)-10-formyltetrahydrofolate + 5-amino-1-(5-phospho-beta-D-ribosyl)imidazole-4-carboxamide = 5-formamido-1-(5-phospho-D-ribosyl)imidazole-4-carboxamide + (6S)-5,6,7,8-tetrahydrofolate. It catalyses the reaction IMP + H2O = 5-formamido-1-(5-phospho-D-ribosyl)imidazole-4-carboxamide. Its pathway is purine metabolism; IMP biosynthesis via de novo pathway; 5-formamido-1-(5-phospho-D-ribosyl)imidazole-4-carboxamide from 5-amino-1-(5-phospho-D-ribosyl)imidazole-4-carboxamide (10-formyl THF route): step 1/1. It participates in purine metabolism; IMP biosynthesis via de novo pathway; IMP from 5-formamido-1-(5-phospho-D-ribosyl)imidazole-4-carboxamide: step 1/1. Its function is as follows. Bifunctional enzyme that catalyzes the last two steps of purine biosynthesis. Acts as a transformylase that incorporates a formyl group to the AMP analog AICAR (5-amino-1-(5-phospho-beta-D-ribosyl)imidazole-4-carboxamide) to produce the intermediate formyl-AICAR (FAICAR). Also catalyzes the cyclization of FAICAR to IMP. In Cryptococcus neoformans var. grubii serotype A (strain H99 / ATCC 208821 / CBS 10515 / FGSC 9487) (Filobasidiella neoformans var. grubii), this protein is Bifunctional purine biosynthesis protein ADE16.